The primary structure comprises 274 residues: Acetyl-coenzyme A carboxylase carboxyl transferase subunit beta (274 aa).

Positions 18–274 constitute a CoA carboxyltransferase N-terminal domain; sequence IWTKCKKCDY…FYNRQCFLKF (257 aa). The Zn(2+) site is built by Cys22, Cys25, Cys41, and Cys44. The C4-type zinc-finger motif lies at 22–44; it reads CKKCDYILLQKDFEENLMVCPKC.

This sequence belongs to the AccD/PCCB family. As to quaternary structure, acetyl-CoA carboxylase is a heterohexamer composed of biotin carboxyl carrier protein (AccB), biotin carboxylase (AccC) and two subunits each of ACCase subunit alpha (AccA) and ACCase subunit beta (AccD). It depends on Zn(2+) as a cofactor.

It is found in the cytoplasm. The enzyme catalyses N(6)-carboxybiotinyl-L-lysyl-[protein] + acetyl-CoA = N(6)-biotinyl-L-lysyl-[protein] + malonyl-CoA. It participates in lipid metabolism; malonyl-CoA biosynthesis; malonyl-CoA from acetyl-CoA: step 1/1. Its function is as follows. Component of the acetyl coenzyme A carboxylase (ACC) complex. Biotin carboxylase (BC) catalyzes the carboxylation of biotin on its carrier protein (BCCP) and then the CO(2) group is transferred by the transcarboxylase to acetyl-CoA to form malonyl-CoA. The sequence is that of Acetyl-coenzyme A carboxylase carboxyl transferase subunit beta from Endomicrobium trichonymphae.